The sequence spans 180 residues: NAD(P)H-quinone oxidoreductase subunit I, chloroplastic (180 aa).

2 consecutive 4Fe-4S ferredoxin-type domains span residues 55–84 and 95–124; these read GRIH…VDWR and LNYS…MTEE. Residues Cys64, Cys67, Cys70, Cys74, Cys104, Cys107, Cys110, and Cys114 each contribute to the [4Fe-4S] cluster site.

This sequence belongs to the complex I 23 kDa subunit family. NDH is composed of at least 16 different subunits, 5 of which are encoded in the nucleus. The cofactor is [4Fe-4S] cluster.

It is found in the plastid. The protein localises to the chloroplast thylakoid membrane. The enzyme catalyses a plastoquinone + NADH + (n+1) H(+)(in) = a plastoquinol + NAD(+) + n H(+)(out). It carries out the reaction a plastoquinone + NADPH + (n+1) H(+)(in) = a plastoquinol + NADP(+) + n H(+)(out). Its function is as follows. NDH shuttles electrons from NAD(P)H:plastoquinone, via FMN and iron-sulfur (Fe-S) centers, to quinones in the photosynthetic chain and possibly in a chloroplast respiratory chain. The immediate electron acceptor for the enzyme in this species is believed to be plastoquinone. Couples the redox reaction to proton translocation, and thus conserves the redox energy in a proton gradient. This is NAD(P)H-quinone oxidoreductase subunit I, chloroplastic from Triticum aestivum (Wheat).